A 92-amino-acid polypeptide reads, in one-letter code: Small ribosomal subunit protein uS19c (92 aa).

Belongs to the universal ribosomal protein uS19 family.

The protein resides in the plastid. The protein localises to the chloroplast. Its function is as follows. Protein S19 forms a complex with S13 that binds strongly to the 16S ribosomal RNA. The chain is Small ribosomal subunit protein uS19c from Fagopyrum esculentum subsp. ancestrale (Wild buckwheat).